A 253-amino-acid polypeptide reads, in one-letter code: 5'/3'-nucleotidase SurE (253 aa).

Positions 8, 9, 39, and 92 each coordinate a divalent metal cation.

The protein belongs to the SurE nucleotidase family. The cofactor is a divalent metal cation.

It localises to the cytoplasm. It carries out the reaction a ribonucleoside 5'-phosphate + H2O = a ribonucleoside + phosphate. The catalysed reaction is a ribonucleoside 3'-phosphate + H2O = a ribonucleoside + phosphate. The enzyme catalyses [phosphate](n) + H2O = [phosphate](n-1) + phosphate + H(+). Its function is as follows. Nucleotidase with a broad substrate specificity as it can dephosphorylate various ribo- and deoxyribonucleoside 5'-monophosphates and ribonucleoside 3'-monophosphates with highest affinity to 3'-AMP. Also hydrolyzes polyphosphate (exopolyphosphatase activity) with the preference for short-chain-length substrates (P20-25). Might be involved in the regulation of dNTP and NTP pools, and in the turnover of 3'-mononucleotides produced by numerous intracellular RNases (T1, T2, and F) during the degradation of various RNAs. The protein is 5'/3'-nucleotidase SurE of Salmonella typhimurium (strain LT2 / SGSC1412 / ATCC 700720).